The sequence spans 485 residues: ATP synthase subunit beta, cyanelle (485 aa).

Residue 162-169 (GGAGVGKT) coordinates ATP.

It belongs to the ATPase alpha/beta chains family. In terms of assembly, F-type ATPases have 2 components, CF(1) - the catalytic core - and CF(0) - the membrane proton channel. CF(1) has five subunits: alpha(3), beta(3), gamma(1), delta(1), epsilon(1). CF(0) has four main subunits: a(1), b(1), b'(1) and c(9-12).

The protein resides in the plastid. The protein localises to the cyanelle thylakoid membrane. It carries out the reaction ATP + H2O + 4 H(+)(in) = ADP + phosphate + 5 H(+)(out). Functionally, produces ATP from ADP in the presence of a proton gradient across the membrane. The catalytic sites are hosted primarily by the beta subunits. In Cyanophora paradoxa, this protein is ATP synthase subunit beta, cyanelle.